The chain runs to 239 residues: Octanoyltransferase (239 aa).

The BPL/LPL catalytic domain maps to 48-236; that stretch reads EGGDELVWLV…AFETVFGETV (189 aa). Residues 87–94, 167–169, and 180–182 each bind substrate; these read RGGEYTYH, ALG, and GLS. The Acyl-thioester intermediate role is filled by Cys-198.

Belongs to the LipB family.

The protein resides in the cytoplasm. The catalysed reaction is octanoyl-[ACP] + L-lysyl-[protein] = N(6)-octanoyl-L-lysyl-[protein] + holo-[ACP] + H(+). It functions in the pathway protein modification; protein lipoylation via endogenous pathway; protein N(6)-(lipoyl)lysine from octanoyl-[acyl-carrier-protein]: step 1/2. Catalyzes the transfer of endogenously produced octanoic acid from octanoyl-acyl-carrier-protein onto the lipoyl domains of lipoate-dependent enzymes. Lipoyl-ACP can also act as a substrate although octanoyl-ACP is likely to be the physiological substrate. The polypeptide is Octanoyltransferase (Rhizobium etli (strain CIAT 652)).